We begin with the raw amino-acid sequence, 114 residues long: Photosystem II reaction center Psb28 protein (114 aa).

This sequence belongs to the Psb28 family. In terms of assembly, part of the photosystem II complex.

It is found in the plastid. Its subcellular location is the chloroplast thylakoid membrane. This is Photosystem II reaction center Psb28 protein from Thalassiosira pseudonana (Marine diatom).